A 279-amino-acid polypeptide reads, in one-letter code: Protoheme IX farnesyltransferase (279 aa).

Transmembrane regions (helical) follow at residues 1 to 21, 29 to 49, 79 to 99, 101 to 121, 128 to 148, 156 to 176, 200 to 220, 225 to 245, and 254 to 274; these read MIKP…FFLA, IFFL…CILN, ILFF…YIYI, FLCT…YSYL, FSTF…YVAV, CTIL…SIII, IIFI…LYFF, FFYF…SFLS, and IWSR…SFLM.

The protein belongs to the UbiA prenyltransferase family. Protoheme IX farnesyltransferase subfamily.

The protein resides in the cell membrane. It carries out the reaction heme b + (2E,6E)-farnesyl diphosphate + H2O = Fe(II)-heme o + diphosphate. It functions in the pathway porphyrin-containing compound metabolism; heme O biosynthesis; heme O from protoheme: step 1/1. Functionally, converts heme B (protoheme IX) to heme O by substitution of the vinyl group on carbon 2 of heme B porphyrin ring with a hydroxyethyl farnesyl side group. This Buchnera aphidicola subsp. Cinara cedri (strain Cc) protein is Protoheme IX farnesyltransferase.